The chain runs to 621 residues: Intermediate filament protein ifc-2 (621 aa).

A head region spans residues serine 20–glutamate 55. The 349-residue stretch at glutamate 52–threonine 400 folds into the IF rod domain. The interval isoleucine 56–leucine 87 is coil 1A. The linker 1 stretch occupies residues arginine 88–leucine 100. The tract at residues tyrosine 101–glutamate 238 is coil 1B. Positions leucine 239–histidine 256 are linker 12. The segment at glutamate 257–threonine 400 is coil 2. A tail region spans residues tyrosine 401 to glutamate 549. The LTD domain maps to serine 508–asparagine 621.

Belongs to the intermediate filament family.

The protein resides in the cytoplasm. Functionally, cytoplasmic intermediate filaments provide mechanical strength to cells. This chain is Intermediate filament protein ifc-2, found in Caenorhabditis briggsae.